The chain runs to 102 residues: Large ribosomal subunit protein bL21 (102 aa).

Belongs to the bacterial ribosomal protein bL21 family. Part of the 50S ribosomal subunit. Contacts protein L20.

Functionally, this protein binds to 23S rRNA in the presence of protein L20. The sequence is that of Large ribosomal subunit protein bL21 from Lawsonia intracellularis.